The chain runs to 280 residues: Putative pyruvate, phosphate dikinase regulatory protein (280 aa).

149–156 (GVSRSSKT) serves as a coordination point for ADP.

This sequence belongs to the pyruvate, phosphate/water dikinase regulatory protein family. PDRP subfamily.

It catalyses the reaction N(tele)-phospho-L-histidyl/L-threonyl-[pyruvate, phosphate dikinase] + ADP = N(tele)-phospho-L-histidyl/O-phospho-L-threonyl-[pyruvate, phosphate dikinase] + AMP + H(+). The catalysed reaction is N(tele)-phospho-L-histidyl/O-phospho-L-threonyl-[pyruvate, phosphate dikinase] + phosphate + H(+) = N(tele)-phospho-L-histidyl/L-threonyl-[pyruvate, phosphate dikinase] + diphosphate. Bifunctional serine/threonine kinase and phosphorylase involved in the regulation of the pyruvate, phosphate dikinase (PPDK) by catalyzing its phosphorylation/dephosphorylation. In Novosphingobium aromaticivorans (strain ATCC 700278 / DSM 12444 / CCUG 56034 / CIP 105152 / NBRC 16084 / F199), this protein is Putative pyruvate, phosphate dikinase regulatory protein.